A 246-amino-acid polypeptide reads, in one-letter code: MPFTFKLFHVDDSRCGMPVSTDGVLLGAWAPLVQAKTILDIGAGSGLLSLMAAQRSQAKITAIELDNDAALDCQQNFDASHWSERLEIICCDIQAYCQREQARQFDHIICNPPYFANGPQSSKFSRATARHTDSLSFDALLQAIKQLLAPEGQASLILPTESVSLLEAILSTYNLRLCHKLLAASVEGKAPNRQILVLGHDLKAKKIHNFGTELQAVAQQQLYIREKTGHYSLAFTLLSQDFYLKL.

It belongs to the methyltransferase superfamily. tRNA (adenine-N(6)-)-methyltransferase family.

It localises to the cytoplasm. The catalysed reaction is adenosine(37) in tRNA1(Val) + S-adenosyl-L-methionine = N(6)-methyladenosine(37) in tRNA1(Val) + S-adenosyl-L-homocysteine + H(+). Functionally, specifically methylates the adenine in position 37 of tRNA(1)(Val) (anticodon cmo5UAC). The polypeptide is tRNA1(Val) (adenine(37)-N6)-methyltransferase (Shewanella halifaxensis (strain HAW-EB4)).